A 177-amino-acid chain; its full sequence is Large ribosomal subunit protein uL6 (177 aa).

The protein belongs to the universal ribosomal protein uL6 family. In terms of assembly, part of the 50S ribosomal subunit.

Its function is as follows. This protein binds to the 23S rRNA, and is important in its secondary structure. It is located near the subunit interface in the base of the L7/L12 stalk, and near the tRNA binding site of the peptidyltransferase center. The chain is Large ribosomal subunit protein uL6 from Beijerinckia indica subsp. indica (strain ATCC 9039 / DSM 1715 / NCIMB 8712).